The chain runs to 525 residues: MATLLRSLALFKRNKDKPPITSGSGGAIRGIKHIIIVPIPGDSSITTRSRLLDRLVRLIGNPDVSGPKLTGALIGILSLFVESPGQLIQRITDDPDVSIRLLEVVQSDQSQSGLTFASRGTNMEDEADQYFSHDDPISSDQSRFGWFENKEISDIEVQDPEGFNMILGTILAQIWVLLAKAVTAPDTAADSELRRWIKYTQQRRVVGEFRLERKWLDVVRNRIAEDLSLRRFMVALILDIKRTPGNKPRIAEMICDIDTYIVEAGLASFILTIKFGIETMYPALGLHEFAGELSTLESLMNLYQQMGETAPYMVILENSIQNKFSAGSYPLLWSYAMGVGVELENSMGGLNFGRSYFDPAYFRLGQEMVRRSAGKVSSTLASELGITAEDARLVSEIAMHTTEDKISRAVGPRQAQVSFLHGDQSENELPRLGGKEDRRVKQSRGEARESYRETGPSRASDARAAHLPTGTPPDTDTAPESSQDPQDSRRSADALLRLQAMAGISEEQGSDTDTPTVHNDRNLLD.

The segment at 1-36 (MATLLRSLALFKRNKDKPPITSGSGGAIRGIKHIII) is homomultimerization. Residues 1 to 375 (MATLLRSLAL…QEMVRRSAGK (375 aa)) are RNA packaging and organization of the helical nucleocapsid. Ncore stretches follow at residues 1 to 400 (MATL…IAMH) and 1 to 403 (MATL…HTTE). The Nuclear localization signal signature appears at 70–77 (TGALIGIL). Positions 180, 195, 202, and 260 each coordinate RNA. T279 is modified (phosphothreonine; by host). N351 contacts RNA. The segment at 373-391 (AGKVSSTLASELGITAEDA) is homomultimerization. The interval 404-525 (DKISRAVGPR…TVHNDRNLLD (122 aa)) is ntail. The tract at residues 418–525 (SFLHGDQSEN…TVHNDRNLLD (108 aa)) is disordered. A Nuclear export signal motif is present at residues 425-440 (SENELPRLGGKEDRRV). Residues 433 to 452 (GGKEDRRVKQSRGEARESYR) show a composition bias toward basic and acidic residues. Low complexity predominate over residues 468–479 (PTGTPPDTDTAP). The interval 477–505 (TAPESSQDPQDSRRSADALLRLQAMAGIS) is interaction with the phosphoprotein.

Belongs to the paramyxoviruses nucleocapsid family. Homomultimer; forms the nucleocapsid. Binds to viral genomic RNA. N0 interacts (via Ncore) with the phosphoprotein (via N-terminus); this interaction allows P to chaperon N0 to avoid N polymerization and non-specific RNA binding before encapsidation. Interacts (via the Ntail) as N-RNA template with the phosphoprotein (via C-terminus XD); this interaction maintains the P/L complex anchored to the nucleocapsid template during the sequential transcription. Interacts with the phosphoprotein; this interaction leads to the formation of membraneless organelles that function as viral replication factories. Interacts with human FCGR2B protein. Interacts with human PPIA/CYPA and PPIB/CYPB. Post-translationally, phosphorylation at Thr-279 is required for the formation of the nucleocapsid.

Its subcellular location is the virion. The protein localises to the host cytoplasm. The protein resides in the host nucleus. Functionally, forms the helical nucleocapsid (NC) in a ratio of 1 N per 6 ribonucleotides, protecting the genome from nucleases. The nucleocapsid (NC) has a helical structure with either 12.35 or 11.64 N per turn, approximately 20 nm in diameter, with a hollow central cavity approximately 5 nm in diameter. The encapsidated genomic RNA serves as template for transcription and replication; encapsidation by N is coupled to RNA synthesis. Forms the encapsidation complex with the phosphoprotein protein P. Before encapsidation, the newly synthesized free N protein, so-called N0, is chaperoned by P. Participates, together with P, in the formation of viral factories (viroplasms), which are large inclusions in the host cytoplasm where replication takes place. N is released in the blood following lysis of measles infected cells, it interacts then with human FCGR2B on immune cells, inducing apoptosis and blocking inflammatory immune response. The chain is Nucleoprotein (N) from Measles virus (strain Shanghai-191 vaccine) (MeV).